A 251-amino-acid chain; its full sequence is Octanoyltransferase (251 aa).

In terms of domain architecture, BPL/LPL catalytic spans 56-241; that stretch reads ADTGDEIWVV…NLDGASAAAD (186 aa). Substrate contacts are provided by residues 96-103, 168-170, and 181-183; these read RGGQITYH, ALG, and GLS. The Acyl-thioester intermediate role is filled by Cys199.

Belongs to the LipB family.

It is found in the cytoplasm. The enzyme catalyses octanoyl-[ACP] + L-lysyl-[protein] = N(6)-octanoyl-L-lysyl-[protein] + holo-[ACP] + H(+). Its pathway is protein modification; protein lipoylation via endogenous pathway; protein N(6)-(lipoyl)lysine from octanoyl-[acyl-carrier-protein]: step 1/2. Its function is as follows. Catalyzes the transfer of endogenously produced octanoic acid from octanoyl-acyl-carrier-protein onto the lipoyl domains of lipoate-dependent enzymes. Lipoyl-ACP can also act as a substrate although octanoyl-ACP is likely to be the physiological substrate. The chain is Octanoyltransferase from Burkholderia orbicola (strain AU 1054).